Here is a 469-residue protein sequence, read N- to C-terminus: RuvB-like helicase 2 (469 aa).

74–81 (GPPSTGKT) contributes to the ATP binding site.

The protein belongs to the RuvB family. May form heterododecamers with RVB1. Component of the SWR1 chromatin remodeling complex, the INO80 chromatin remodeling complex, and of the R2TP complex.

It localises to the nucleus. The enzyme catalyses ATP + H2O = ADP + phosphate + H(+). Its function is as follows. DNA helicase which participates in several chromatin remodeling complexes, including the SWR1 and the INO80 complexes. The SWR1 complex mediates the ATP-dependent exchange of histone H2A for the H2A variant HZT1 leading to transcriptional regulation of selected genes by chromatin remodeling. The INO80 complex remodels chromatin by shifting nucleosomes and is involved in DNA repair. Also involved in pre-rRNA processing. The protein is RuvB-like helicase 2 (RVB2) of Eremothecium gossypii (strain ATCC 10895 / CBS 109.51 / FGSC 9923 / NRRL Y-1056) (Yeast).